Reading from the N-terminus, the 347-residue chain is NADH-ubiquinone oxidoreductase chain 2 (347 aa).

11 helical membrane-spanning segments follow: residues 3–23 (PMTF…VLLS), 25–45 (HWFM…PVLM), 59–79 (YFLT…INTM), 96–116 (ILIT…FWVP), 127–147 (GLIL…QIYP), 149–169 (LNTN…GWGG), 178–198 (IMAY…TYNP), 201–221 (SLLN…LLII), 239–259 (IVTT…PLTG), 274–294 (NSLI…FFYM), and 326–346 (TAPL…LITL).

The protein belongs to the complex I subunit 2 family. In terms of assembly, core subunit of respiratory chain NADH dehydrogenase (Complex I) which is composed of 45 different subunits. Interacts with TMEM242.

Its subcellular location is the mitochondrion inner membrane. The enzyme catalyses a ubiquinone + NADH + 5 H(+)(in) = a ubiquinol + NAD(+) + 4 H(+)(out). In terms of biological role, core subunit of the mitochondrial membrane respiratory chain NADH dehydrogenase (Complex I) which catalyzes electron transfer from NADH through the respiratory chain, using ubiquinone as an electron acceptor. Essential for the catalytic activity and assembly of complex I. In Sylvisorex ollula (Greater forest shrew), this protein is NADH-ubiquinone oxidoreductase chain 2.